Reading from the N-terminus, the 308-residue chain is Thiohydrolase (308 aa).

It belongs to the polyketide transferase af380 family.

The protein operates within mycotoxin biosynthesis. Functionally, thiohydrolase; part of the gene cluster that mediates the biosynthesis of brefeldin A (BFA), a protein transport inhibitor that shows antiviral, antifungal, and antitumor properties. The proposed biosynthesis of BFA involves formation of an acyclic polyketide chain that is differentially tailored throughout the backbone. The highly reducing polyketide synthase Bref-PKS is proposed to synthesize the precisely reduced octaketide precursor, which could then be directly offloaded by the thiohydrolase enzyme Bref-TH followed by a cytochrome P450 monooxygenase-mediated formation of the cyclopentane ring and macrocyclization to afford 7-deoxy BFA. Alternatively, the first ring annulation can also occur on the ACP-tethered intermediate before the thiohydrolase release and lactonization. The C7-hydroxylation by another cytochrome P450 monooxygenase is believed to be the final step in the process to obtain the final structure of BFA. In addition to the HRPKS Bref-PKS and the thiohydrolase Bref-TH, the brefeldin A biosynthesis cluster contains 4 cytochrome p450 monooxygenases (called orf3 to orf6), as well a the probable cluster-specific transcription regulator orf8. In Eupenicillium brefeldianum (Penicillium brefeldianum), this protein is Thiohydrolase.